The primary structure comprises 483 residues: Cobyric acid synthase (483 aa).

The GATase cobBQ-type domain maps to 248–435 (VLKVVVPVLP…LHGLFETAAA (188 aa)). Residue cysteine 329 is the Nucleophile of the active site. Histidine 427 is an active-site residue.

This sequence belongs to the CobB/CobQ family. CobQ subfamily.

It participates in cofactor biosynthesis; adenosylcobalamin biosynthesis. Its function is as follows. Catalyzes amidations at positions B, D, E, and G on adenosylcobyrinic A,C-diamide. NH(2) groups are provided by glutamine, and one molecule of ATP is hydrogenolyzed for each amidation. The sequence is that of Cobyric acid synthase from Pseudomonas fluorescens (strain SBW25).